Consider the following 522-residue polypeptide: Proactivator polypeptide-like 1 (522 aa).

Positions 1–17 (MLCALILWSGLLGAARA) are cleaved as a signal peptide. Positions 18–59 (SPISVPRECAKGSEVWCQDLQAAAKCRAVRHCQSAVWNKPTV) are excised as a propeptide. The Saposin A-type 1 domain maps to 19 to 59 (PISVPRECAKGSEVWCQDLQAAAKCRAVRHCQSAVWNKPTV). 4 Saposin B-type domains span residues 60-144 (KSLP…EPLQ), 183-261 (EGAV…ERES), 291-371 (LGLT…GSKR), and 393-474 (QGSF…HGPK). Cystine bridges form between Cys64–Cys140, Cys67–Cys134, and Cys95–Cys107. The propeptide occupies 146-183 (HLAETTSERPLTQEDANEVMAPFLSNGALSFHPSQMPE). 3 disulfide bridges follow: Cys187/Cys257, Cys190/Cys251, and Cys216/Cys227. The N-linked (GlcNAc...) asparagine glycan is linked to Asn204. Residues 261 to 290 (SAHWLTRVAAVDGVPSLEMEMPRTNELQMQ) constitute a propeptide that is removed on maturation. Intrachain disulfides connect Cys295-Cys367, Cys298-Cys361, and Cys326-Cys337. Asn312 carries N-linked (GlcNAc...) (high mannose) asparagine glycosylation. Positions 371-392 (RRARSISRAVATTPSLPVDEEN) are excised as a propeptide. 3 disulfides stabilise this stretch: Cys397–Cys470, Cys400–Cys464, and Cys428–Cys439. Positions 475 to 522 (TPLLGTDQCVMGPSFWCKSPEAAEMCNALEHCQRLVWKKPVSKINEQP) are excised as a propeptide. Residues 476 to 516 (PLLGTDQCVMGPSFWCKSPEAAEMCNALEHCQRLVWKKPVS) form the Saposin A-type 2 domain.

It localises to the secreted. Its function is as follows. May activate the lysosomal degradation of sphingolipids. In Mus musculus (Mouse), this protein is Proactivator polypeptide-like 1 (Psapl1).